The primary structure comprises 203 residues: Superoxide dismutase [Mn] (203 aa).

The Mn(2+) site is built by H27, H81, D164, and H168.

This sequence belongs to the iron/manganese superoxide dismutase family. Mn(2+) is required as a cofactor.

The enzyme catalyses 2 superoxide + 2 H(+) = H2O2 + O2. Its function is as follows. Destroys superoxide anion radicals which are normally produced within the cells and which are toxic to biological systems. This chain is Superoxide dismutase [Mn] (sodA), found in Xanthomonas campestris pv. campestris (strain 8004).